The chain runs to 364 residues: Chaperone protein DnaJ (364 aa).

In terms of domain architecture, J spans 4–69 (DYYEILGLSK…NKKAKYDRFG (66 aa)). The CR-type zinc-finger motif lies at 135 to 213 (GYKNNINITR…CKGKGSLTKQ (79 aa)). Residues Cys148, Cys151, Cys165, Cys168, Cys187, Cys190, Cys201, and Cys204 each contribute to the Zn(2+) site. 4 CXXCXGXG motif repeats span residues 148–155 (CDSCLGKK), 165–172 (CNMCNGSG), 187–194 (CSKCYGEG), and 201–208 (CKSCKGKG).

This sequence belongs to the DnaJ family. Homodimer. Zn(2+) is required as a cofactor.

The protein localises to the cytoplasm. Its function is as follows. Participates actively in the response to hyperosmotic and heat shock by preventing the aggregation of stress-denatured proteins and by disaggregating proteins, also in an autonomous, DnaK-independent fashion. Unfolded proteins bind initially to DnaJ; upon interaction with the DnaJ-bound protein, DnaK hydrolyzes its bound ATP, resulting in the formation of a stable complex. GrpE releases ADP from DnaK; ATP binding to DnaK triggers the release of the substrate protein, thus completing the reaction cycle. Several rounds of ATP-dependent interactions between DnaJ, DnaK and GrpE are required for fully efficient folding. Also involved, together with DnaK and GrpE, in the DNA replication of plasmids through activation of initiation proteins. The sequence is that of Chaperone protein DnaJ from Borreliella burgdorferi (strain ATCC 35210 / DSM 4680 / CIP 102532 / B31) (Borrelia burgdorferi).